We begin with the raw amino-acid sequence, 292 residues long: Transcription antiterminator LacT (292 aa).

2 consecutive PRD domains span residues 66–170 (NIPI…DDGE) and 172–284 (VFGK…APAQ).

The protein belongs to the transcriptional antiterminator BglG family.

Functionally, mediates positive regulation of the lac operon by functioning as an antiterminator factor of transcription. This chain is Transcription antiterminator LacT (lacT), found in Lacticaseibacillus casei (Lactobacillus casei).